The chain runs to 251 residues: CDP-diacylglycerol pyrophosphatase (251 aa).

A helical membrane pass occupies residues 4–24; sequence AGLLFLVMIVIAVVAAGIGYW.

The protein belongs to the Cdh family.

Its subcellular location is the cell inner membrane. The catalysed reaction is a CDP-1,2-diacyl-sn-glycerol + H2O = a 1,2-diacyl-sn-glycero-3-phosphate + CMP + 2 H(+). It participates in phospholipid metabolism; CDP-diacylglycerol degradation; phosphatidate from CDP-diacylglycerol: step 1/1. This Escherichia coli O81 (strain ED1a) protein is CDP-diacylglycerol pyrophosphatase.